Consider the following 210-residue polypeptide: Secreted isochorismatase effector Isc1 (210 aa).

Active-site residues include aspartate 25, lysine 90, and cysteine 124.

Belongs to the isochorismatase family.

It is found in the secreted. Its subcellular location is the host cytoplasm. The protein resides in the host nucleus. It carries out the reaction isochorismate + H2O = (2S,3S)-2,3-dihydroxy-2,3-dihydrobenzoate + pyruvate. Secreted isochorismatase required for full virulence of P.sojae. Suppresses salicylate-mediated innate immunity of the host by disrupting the plant salicylate metabolism pathway via hydrolysis of its isochorismate precursor. In Phytophthora sojae (strain P6497) (Soybean stem and root rot agent), this protein is Secreted isochorismatase effector Isc1.